The primary structure comprises 214 residues: Probable GTP-binding protein EngB (214 aa).

In terms of domain architecture, EngB-type G spans 24-199; it reads GGYEVAFAGR…RGIVGGWLGL (176 aa). GTP contacts are provided by residues 32–39, 59–63, 77–80, 144–147, and 178–180; these read GRSNAGKS, GRTQQ, DLPG, TKAD, and YSG. Mg(2+) is bound by residues serine 39 and threonine 61.

Belongs to the TRAFAC class TrmE-Era-EngA-EngB-Septin-like GTPase superfamily. EngB GTPase family. The cofactor is Mg(2+).

Its function is as follows. Necessary for normal cell division and for the maintenance of normal septation. This Xanthomonas axonopodis pv. citri (strain 306) protein is Probable GTP-binding protein EngB.